We begin with the raw amino-acid sequence, 393 residues long: NAD(P)H-quinone oxidoreductase subunit H, chloroplastic (393 aa).

This sequence belongs to the complex I 49 kDa subunit family. In terms of assembly, NDH is composed of at least 16 different subunits, 5 of which are encoded in the nucleus.

The protein localises to the plastid. It localises to the chloroplast thylakoid membrane. It carries out the reaction a plastoquinone + NADH + (n+1) H(+)(in) = a plastoquinol + NAD(+) + n H(+)(out). The catalysed reaction is a plastoquinone + NADPH + (n+1) H(+)(in) = a plastoquinol + NADP(+) + n H(+)(out). NDH shuttles electrons from NAD(P)H:plastoquinone, via FMN and iron-sulfur (Fe-S) centers, to quinones in the photosynthetic chain and possibly in a chloroplast respiratory chain. The immediate electron acceptor for the enzyme in this species is believed to be plastoquinone. Couples the redox reaction to proton translocation, and thus conserves the redox energy in a proton gradient. This chain is NAD(P)H-quinone oxidoreductase subunit H, chloroplastic, found in Solanum lycopersicum (Tomato).